Here is a 963-residue protein sequence, read N- to C-terminus: Adhesion G protein-coupled receptor D2 (963 aa).

Over 1-662 (MDAPWGAGER…EEESLLRTLS (662 aa)) the chain is Extracellular. The disordered stretch occupies residues 18 to 38 (DRSGVSLGPPPTPQVNQGTLG). The Pentraxin (PTX) domain occupies 116 to 325 (TTAVLVFDER…LPTVWVRLLC (210 aa)). Cysteines 146 and 212 form a disulfide. N-linked (GlcNAc...) asparagine glycosylation occurs at Asn-271. Residues 489–649 (MALVASVQRL…AILLQIYEVQ (161 aa)) form the GAIN-B domain. Residues 599–649 (PLFPPHPPSPYTGGAWATTGCSVAALYLDSTACFCNHSTSFAILLQIYEVQ) form a GPS region. The cysteines at positions 619 and 633 are disulfide-linked. N-linked (GlcNAc...) asparagine glycosylation is present at Asn-634. A helical membrane pass occupies residues 663–683 (FVGCGVSFCALTTTFLLFLVA). Residues 684–691 (GVPKSERT) are Cytoplasmic-facing. A helical membrane pass occupies residues 692-712 (TVHKNLTFSLASAEGFLMTSE). Topologically, residues 713–720 (WAKANEVA) are extracellular. Residues 721–741 (CVAVTVAMHFLFLVAFSWMLV) traverse the membrane as a helical segment. Topologically, residues 742–762 (EGLLLWRKVVAVSMHPGPGMR) are cytoplasmic. The helical transmembrane segment at 763–783 (LYHATGWGVPVGIVAVTLAML) threads the bilayer. Residues 784–800 (PHDYVAPGHCWLNVHTN) are Extracellular-facing. Residues 801–821 (AIWAFVGPVLFVLTANTCILA) traverse the membrane as a helical segment. Residues 822 to 857 (RVVMITVSSARRRARMLSPQPCLQQQIWTQIWATVK) are Cytoplasmic-facing. The chain crosses the membrane as a helical span at residues 858 to 878 (PVLVLLPVLGLTWLAGILVHL). Residues 879–880 (SP) lie on the Extracellular side of the membrane. The chain crosses the membrane as a helical span at residues 881-901 (AWAYAAVGLNSIQGLYIFLVY). Residues 902-963 (AACNEEVRSA…TPRHPLKAPA (62 aa)) are Cytoplasmic-facing.

The protein belongs to the G-protein coupled receptor 2 family. Adhesion G-protein coupled receptor (ADGR) subfamily.

Its subcellular location is the membrane. Functionally, orphan receptor. The chain is Adhesion G protein-coupled receptor D2 (ADGRD2) from Homo sapiens (Human).